The primary structure comprises 146 residues: Phospholipase A2, membrane associated (146 aa).

An N-terminal signal peptide occupies residues Met-1–Gly-21. 7 cysteine pairs are disulfide-bonded: Cys-47/Cys-139, Cys-49/Cys-65, Cys-64/Cys-119, Cys-70/Cys-146, Cys-71/Cys-112, Cys-80/Cys-105, and Cys-98/Cys-110. 3 residues coordinate Ca(2+): His-48, Gly-50, and Gly-52. His-68 is a catalytic residue. Asp-69 is a Ca(2+) binding site. Asp-113 is a catalytic residue.

This sequence belongs to the phospholipase A2 family. It depends on Ca(2+) as a cofactor.

The protein localises to the secreted. It localises to the cell membrane. Its subcellular location is the mitochondrion outer membrane. The enzyme catalyses a 1,2-diacyl-sn-glycero-3-phosphoethanolamine + H2O = a 1-acyl-sn-glycero-3-phosphoethanolamine + a fatty acid + H(+). It catalyses the reaction 1-hexadecanoyl-2-(9Z-octadecenoyl)-sn-glycero-3-phosphoethanolamine + H2O = 1-hexadecanoyl-sn-glycero-3-phosphoethanolamine + (9Z)-octadecenoate + H(+). It carries out the reaction 1-hexadecanoyl-2-(9Z,12Z-octadecadienoyl)-sn-glycero-3-phosphoethanolamine + H2O = 1-hexadecanoyl-sn-glycero-3-phosphoethanolamine + (9Z,12Z)-octadecadienoate + H(+). The catalysed reaction is 1-hexadecanoyl-2-(5Z,8Z,11Z,14Z-eicosatetraenoyl)-sn-glycero-3-phosphoethanolamine + H2O = 1-hexadecanoyl-sn-glycero-3-phosphoethanolamine + (5Z,8Z,11Z,14Z)-eicosatetraenoate + H(+). The enzyme catalyses N-hexadecanoyl-1,2-di-(9Z-octadecenoyl)-sn-glycero-3-phosphoethanolamine + H2O = N-hexadecanoyl-1-(9Z-octadecenoyl)-sn-glycero-3-phosphoethanolamine + (9Z)-octadecenoate + H(+). It catalyses the reaction 1,2-dihexadecanoyl-sn-glycero-3-phospho-(1'-sn-glycerol) + H2O = 1-hexadecanoyl-sn-glycero-3-phospho-(1'-sn-glycerol) + hexadecanoate + H(+). It carries out the reaction 1-hexadecanoyl-2-(9Z-octadecenoyl)-sn-glycero-3-phosphoglycerol + H2O = 1-hexadecanoyl-sn-glycero-3-phosphoglycerol + (9Z)-octadecenoate + H(+). The catalysed reaction is 1-hexadecanoyl-2-(9Z-octadecenoyl)-sn-glycero-3-phospho-(1'-sn-glycerol) + H2O = 1-hexadecanoyl-sn-glycero-3-phospho-(1'-sn-glycerol) + (9Z)-octadecenoate + H(+). The enzyme catalyses a 1,2-diacyl-sn-glycero-3-phosphocholine + H2O = a 1-acyl-sn-glycero-3-phosphocholine + a fatty acid + H(+). It catalyses the reaction 1,2-dihexadecanoyl-sn-glycero-3-phosphocholine + H2O = 1-hexadecanoyl-sn-glycero-3-phosphocholine + hexadecanoate + H(+). It carries out the reaction 1-hexadecanoyl-2-(9Z-octadecenoyl)-sn-glycero-3-phosphocholine + H2O = 1-hexadecanoyl-sn-glycero-3-phosphocholine + (9Z)-octadecenoate + H(+). The catalysed reaction is 1-hexadecanoyl-2-(9Z,12Z-octadecadienoyl)-sn-glycero-3-phosphocholine + H2O = (9Z,12Z)-octadecadienoate + 1-hexadecanoyl-sn-glycero-3-phosphocholine + H(+). The enzyme catalyses 1-hexadecanoyl-2-(4Z,7Z,10Z,13Z,16Z,19Z-docosahexaenoyl)-sn-glycero-3-phosphocholine + H2O = (4Z,7Z,10Z,13Z,16Z,19Z)-docosahexaenoate + 1-hexadecanoyl-sn-glycero-3-phosphocholine + H(+). In terms of biological role, secretory calcium-dependent phospholipase A2 that primarily targets extracellular phospholipids with implications in host antimicrobial defense, inflammatory response and tissue regeneration. Hydrolyzes the ester bond of the fatty acyl group attached at sn-2 position of phospholipids (phospholipase A2 activity) with preference for phosphatidylethanolamines and phosphatidylglycerols over phosphatidylcholines. Contributes to lipid remodeling of cellular membranes and generation of lipid mediators involved in pathogen clearance. Displays bactericidal activity against Gram-positive bacteria by directly hydrolyzing phospholipids of the bacterial membrane. Upon sterile inflammation, targets membrane phospholipids of extracellular mitochondria released from activated platelets, generating free unsaturated fatty acids such as arachidonate that is used by neighboring leukocytes to synthesize inflammatory eicosanoids such as leukotrienes. Simultaneously, by compromising mitochondrial membrane integrity, promotes the release in circulation of potent damage-associated molecular pattern molecules that activate the innate immune response. Plays a stem cell regulator role in the intestinal crypt. Within intracellular compartment mediates Paneth cell differentiation and its stem cell supporting functions by inhibiting Wnt signaling pathway in intestinal stem cell (ICS). Secreted in the intestinal lumen upon inflammation, acts in an autocrine way and promotes prostaglandin E2 synthesis that stimulates Wnt signaling pathway in ICS cells and tissue regeneration. May play a role in the biosynthesis of N-acyl ethanolamines that regulate energy metabolism and inflammation. Hydrolyzes N-acyl phosphatidylethanolamines to N-acyl lysophosphatidylethanolamines, which are further cleaved by a lysophospholipase D to release N-acyl ethanolamines. Independent of its catalytic activity, acts as a ligand for integrins. Binds to and activates integrins ITGAV:ITGB3, ITGA4:ITGB1 and ITGA5:ITGB1. Binds to a site (site 2) which is distinct from the classical ligand-binding site (site 1) and induces integrin conformational changes and enhanced ligand binding to site 1. Induces cell proliferation in an integrin-dependent manner. The protein is Phospholipase A2, membrane associated (Pla2g2a) of Rattus norvegicus (Rat).